Here is a 142-residue protein sequence, read N- to C-terminus: Transcriptional regulator MraZ (142 aa).

2 SpoVT-AbrB domains span residues 5–47 (EYPY…PLAS) and 76–119 (ANKA…NPER).

Belongs to the MraZ family. As to quaternary structure, forms oligomers.

It localises to the cytoplasm. The protein resides in the nucleoid. The protein is Transcriptional regulator MraZ of Deinococcus geothermalis (strain DSM 11300 / CIP 105573 / AG-3a).